A 77-amino-acid chain; its full sequence is U8-lycotoxin-Ls1s (77 aa).

Positions 1-20 are cleaved as a signal peptide; it reads MKLIIFTGLVLFAIVSLIEA. Positions 21 to 26 are excised as a propeptide; sequence QAENER.

The protein belongs to the neurotoxin 19 (CSTX) family. 08 (U8-Lctx) subfamily. Contains 4 disulfide bonds. As to expression, expressed by the venom gland.

The protein localises to the secreted. This is U8-lycotoxin-Ls1s from Lycosa singoriensis (Wolf spider).